The chain runs to 391 residues: Tumor susceptibility gene 101 protein (391 aa).

N-acetylalanine is present on Ala-2. The UEV domain maps to 2–145; it reads AVSESQLKKM…GEEPPVFSRP (144 aa). Residues 159 to 163 are interaction with CEP55; sequence PPNTS. The tract at residues 197–220 is disordered; the sequence is YPATTSSQYPSQPPVTTVGPSRDG. Residues 200–215 are compositionally biased toward polar residues; it reads TTSSQYPSQPPVTTVG. Thr-221 is subject to Phosphothreonine. Positions 237–317 form a coiled coil; the sequence is DKLRWRMKEE…NQSENNDIDE (81 aa). A PTAP/PSAP motif motif is present at residues 321–324; it reads PTAP. In terms of domain architecture, SB spans 323–391; the sequence is APLYKQILNL…RKTAGLSDLY (69 aa).

It belongs to the ubiquitin-conjugating enzyme family. UEV subfamily. Component of the ESCRT-I complex (endosomal sorting complex required for transport I) which consists of TSG101, VPS28, a VPS37 protein (VPS37A to -D) and MVB12A or MVB12B in a 1:1:1:1 stoichiometry. Interacts with VPS37A, VPS37B and VPS37C. Component of an ESCRT-I complex (endosomal sorting complex required for transport I) which consists of TSG101, VPS28, VPS37A and UBAP1 in a 1:1:1:1 stoichiometry. Interacts with DMAP1. Interacts with GMCL. Interacts with ubiquitin, stathmin and AATF. Interacts with HGS; the interaction mediates the association with the ESCRT-0 complex. Interacts with GGA1 and GGA3. Interacts (via UEV domain) with PDCD6IP/AIP1. Interacts with VPS28, SNF8 and VPS36. Self-associates. Interacts with MVB12A; the association appears to be mediated by the TSG101-VPS37 binary subcomplex. Interacts with VPS37D. Interacts with LRSAM1. Interacts with CEP55; the interaction is required for cytokinesis. Interacts with PDCD6. Interacts with LITAF. Interacts with murine leukemia virus Gag polyprotein (via PSAP motif). Interacts with MGRN1. Interacts with ARRDC1; recruits TSG101 to the plasma membrane. Monoubiquitinated at multiple sites by LRSAM1 and by MGRN1. Ubiquitination inactivates it, possibly by regulating its shuttling between an active membrane-bound protein and an inactive soluble form. Ubiquitination by MGRN1 requires the presence of UBE2D1. As to expression, ubiquitous. Higher expression in brain and mammary gland. Lower expression in liver and tumoral tissues.

It localises to the cytoplasm. It is found in the early endosome membrane. The protein localises to the late endosome membrane. Its subcellular location is the cytoskeleton. The protein resides in the microtubule organizing center. It localises to the centrosome. It is found in the midbody. The protein localises to the midbody ring. Its subcellular location is the nucleus. Component of the ESCRT-I complex, a regulator of vesicular trafficking process. Binds to ubiquitinated cargo proteins and is required for the sorting of endocytic ubiquitinated cargos into multivesicular bodies (MVBs). Mediates the association between the ESCRT-0 and ESCRT-I complex. Required for completion of cytokinesis; the function requires CEP55. May be involved in cell growth and differentiation. Acts as a negative growth regulator. Required for the exosomal release of SDCBP, CD63 and syndecan. It may also play a role in the extracellular release of microvesicles that differ from the exosomes. This Mus musculus (Mouse) protein is Tumor susceptibility gene 101 protein (Tsg101).